The chain runs to 216 residues: Orotate phosphoribosyltransferase (216 aa).

5-phospho-alpha-D-ribose 1-diphosphate is bound at residue lysine 30. Residue 38–39 (FF) coordinates orotate. 5-phospho-alpha-D-ribose 1-diphosphate-binding positions include 75-76 (YK), arginine 102, lysine 103, lysine 106, histidine 108, and 128-136 (DDVITAGTA). Orotate contacts are provided by threonine 132 and arginine 160.

It belongs to the purine/pyrimidine phosphoribosyltransferase family. PyrE subfamily. In terms of assembly, homodimer. Requires Mg(2+) as cofactor.

The enzyme catalyses orotidine 5'-phosphate + diphosphate = orotate + 5-phospho-alpha-D-ribose 1-diphosphate. It participates in pyrimidine metabolism; UMP biosynthesis via de novo pathway; UMP from orotate: step 1/2. Its function is as follows. Catalyzes the transfer of a ribosyl phosphate group from 5-phosphoribose 1-diphosphate to orotate, leading to the formation of orotidine monophosphate (OMP). This chain is Orotate phosphoribosyltransferase, found in Acinetobacter baumannii (strain AB307-0294).